The primary structure comprises 435 residues: tRNA modification GTPase MnmE (435 aa).

3 residues coordinate (6S)-5-formyl-5,6,7,8-tetrahydrofolate: R24, E85, and R124. One can recognise a TrmE-type G domain in the interval 220 to 361 (GLVFTIVGAP…LRTALAERAR (142 aa)). N230 serves as a coordination point for K(+). GTP contacts are provided by residues 230–235 (NVGKSS), 249–255 (SAIAGTT), and 274–277 (DTAG). S234 is a binding site for Mg(2+). K(+) contacts are provided by S249, I251, and T254. T255 serves as a coordination point for Mg(2+). Residue K435 coordinates (6S)-5-formyl-5,6,7,8-tetrahydrofolate.

It belongs to the TRAFAC class TrmE-Era-EngA-EngB-Septin-like GTPase superfamily. TrmE GTPase family. Homodimer. Heterotetramer of two MnmE and two MnmG subunits. It depends on K(+) as a cofactor.

The protein resides in the cytoplasm. Functionally, exhibits a very high intrinsic GTPase hydrolysis rate. Involved in the addition of a carboxymethylaminomethyl (cmnm) group at the wobble position (U34) of certain tRNAs, forming tRNA-cmnm(5)s(2)U34. This is tRNA modification GTPase MnmE from Gluconacetobacter diazotrophicus (strain ATCC 49037 / DSM 5601 / CCUG 37298 / CIP 103539 / LMG 7603 / PAl5).